The primary structure comprises 80 residues: Saposin-B-Val (80 aa).

The Saposin B-type domain maps to 1-80 (GDVCQDCIQM…CGLVGFCEEV (80 aa)). Disulfide bonds link Cys-4/Cys-77, Cys-7/Cys-71, and Cys-36/Cys-47. Asn-21 carries N-linked (GlcNAc...) (complex) asparagine glycosylation.

In terms of assembly, saposin-B is a homodimer. Interacts with GRN; facilitates lysosomal delivery of progranulin from the extracellular space and the biosynthetic pathway. Post-translationally, the one residue extended Saposin-B-Val is only found in a minority of the chains.

In terms of biological role, saposin-B stimulates the hydrolysis of galacto-cerebroside sulfate by arylsulfatase A (EC 3.1.6.8), GM1 gangliosides by beta-galactosidase (EC 3.2.1.23) and globotriaosylceramide by alpha-galactosidase A (EC 3.2.1.22). Saposin-B forms a solubilizing complex with the substrates of the sphingolipid hydrolases. The chain is Saposin-B-Val (PSAP) from Sus scrofa (Pig).